A 255-amino-acid polypeptide reads, in one-letter code: Small ribosomal subunit protein uS2 (255 aa).

Residues 230–255 (QGSSGRDLGASSEVPVEPALEEAAEG) are disordered.

This sequence belongs to the universal ribosomal protein uS2 family.

In Rhizobium johnstonii (strain DSM 114642 / LMG 32736 / 3841) (Rhizobium leguminosarum bv. viciae), this protein is Small ribosomal subunit protein uS2.